Reading from the N-terminus, the 569-residue chain is Sulfite reductase [NADPH] hemoprotein beta-component (569 aa).

[4Fe-4S] cluster-binding residues include Cys-433, Cys-439, Cys-478, and Cys-482. Cys-482 is a siroheme binding site.

The protein belongs to the nitrite and sulfite reductase 4Fe-4S domain family. Alpha(8)-beta(8). The alpha component is a flavoprotein, the beta component is a hemoprotein. The cofactor is siroheme. [4Fe-4S] cluster is required as a cofactor.

It catalyses the reaction hydrogen sulfide + 3 NADP(+) + 3 H2O = sulfite + 3 NADPH + 4 H(+). It functions in the pathway sulfur metabolism; hydrogen sulfide biosynthesis; hydrogen sulfide from sulfite (NADPH route): step 1/1. In terms of biological role, component of the sulfite reductase complex that catalyzes the 6-electron reduction of sulfite to sulfide. This is one of several activities required for the biosynthesis of L-cysteine from sulfate. This Blochmanniella floridana protein is Sulfite reductase [NADPH] hemoprotein beta-component.